The sequence spans 439 residues: Ribosomal protein uS12 methylthiotransferase RimO (439 aa).

The region spanning 7–119 (KQLCLISLGC…IDIMIAKKQN (113 aa)) is the MTTase N-terminal domain. Residues C16, C50, C82, C151, C155, and C158 each contribute to the [4Fe-4S] cluster site. A Radical SAM core domain is found at 137–365 (TGSSVHAYVK…NKIALKHQNN (229 aa)).

The protein belongs to the methylthiotransferase family. RimO subfamily. [4Fe-4S] cluster serves as cofactor.

It localises to the cytoplasm. The enzyme catalyses L-aspartate(89)-[ribosomal protein uS12]-hydrogen + (sulfur carrier)-SH + AH2 + 2 S-adenosyl-L-methionine = 3-methylsulfanyl-L-aspartate(89)-[ribosomal protein uS12]-hydrogen + (sulfur carrier)-H + 5'-deoxyadenosine + L-methionine + A + S-adenosyl-L-homocysteine + 2 H(+). In terms of biological role, catalyzes the methylthiolation of an aspartic acid residue of ribosomal protein uS12. The chain is Ribosomal protein uS12 methylthiotransferase RimO from Helicobacter pylori (strain Shi470).